We begin with the raw amino-acid sequence, 815 residues long: Lon protease 1 (815 aa).

The Lon N-terminal domain maps to 19-212 (MPLLPLRDIV…KLFGQIRSEI (194 aa)). 364 to 371 (GPPGVGKT) serves as a coordination point for ATP. Positions 601 to 782 (KDEIGLAVGL…DDVLRKAMVV (182 aa)) constitute a Lon proteolytic domain. Active-site residues include serine 688 and lysine 731. The interval 793-815 (EAGAQQAVMFEQKPPAADEIRAH) is disordered.

This sequence belongs to the peptidase S16 family. In terms of assembly, homohexamer. Organized in a ring with a central cavity.

The protein resides in the cytoplasm. The catalysed reaction is Hydrolysis of proteins in presence of ATP.. ATP-dependent serine protease that mediates the selective degradation of mutant and abnormal proteins as well as certain short-lived regulatory proteins. Required for cellular homeostasis and for survival from DNA damage and developmental changes induced by stress. Degrades polypeptides processively to yield small peptide fragments that are 5 to 10 amino acids long. Binds to DNA in a double-stranded, site-specific manner. In Syntrophobacter fumaroxidans (strain DSM 10017 / MPOB), this protein is Lon protease 1.